Consider the following 172-residue polypeptide: L-methionine sulfoximine/L-methionine sulfone acetyltransferase (172 aa).

Positions 3-166 constitute an N-acetyltransferase domain; sequence ASIRDAGVAD…DLTFMQLNLD (164 aa). Substrate-binding positions include 75–77 and 85–87; these read RPF and EHS. Acetyl-CoA is bound by residues 88 to 90, 96 to 101, and Asn-127; these read VYV and GKGLGV.

As to quaternary structure, homodimer.

It carries out the reaction L-methionine sulfoximine + acetyl-CoA = N-acetyl-L-methionine sulfoximine + CoA + H(+). It catalyses the reaction L-methionine sulfone + acetyl-CoA = N-acetyl-L-methionine sulfone + CoA + H(+). Plays a role in the resistance against the toxic effects of L-methionine sulfoximine (MSX), a rare amino acid, which inhibits glutamine synthetase (GlnA). Catalyzes the acetylation of L-methionine sulfoximine (MSX). The protein is L-methionine sulfoximine/L-methionine sulfone acetyltransferase of Pseudomonas aeruginosa (strain ATCC 15692 / DSM 22644 / CIP 104116 / JCM 14847 / LMG 12228 / 1C / PRS 101 / PAO1).